We begin with the raw amino-acid sequence, 185 residues long: Large ribosomal subunit protein uL5 (185 aa).

The protein belongs to the universal ribosomal protein uL5 family. Part of the 50S ribosomal subunit; part of the 5S rRNA/L5/L18/L25 subcomplex. Contacts the 5S rRNA and the P site tRNA. Forms a bridge to the 30S subunit in the 70S ribosome.

Functionally, this is one of the proteins that bind and probably mediate the attachment of the 5S RNA into the large ribosomal subunit, where it forms part of the central protuberance. In the 70S ribosome it contacts protein S13 of the 30S subunit (bridge B1b), connecting the 2 subunits; this bridge is implicated in subunit movement. Contacts the P site tRNA; the 5S rRNA and some of its associated proteins might help stabilize positioning of ribosome-bound tRNAs. The sequence is that of Large ribosomal subunit protein uL5 from Nitrobacter hamburgensis (strain DSM 10229 / NCIMB 13809 / X14).